A 200-amino-acid polypeptide reads, in one-letter code: Lipopolysaccharide core heptose(II)-phosphate phosphatase (200 aa).

The N-terminal stretch at 1-25 (MLAFCRSSLKSKKYFIILLALAAIA) is a signal peptide.

The protein belongs to the phosphoglycerate mutase family. Ais subfamily.

It is found in the periplasm. It functions in the pathway bacterial outer membrane biogenesis; lipopolysaccharide metabolism. Catalyzes the dephosphorylation of heptose(II) of the outer membrane lipopolysaccharide core. In Escherichia coli O6:K15:H31 (strain 536 / UPEC), this protein is Lipopolysaccharide core heptose(II)-phosphate phosphatase.